A 386-amino-acid chain; its full sequence is Adiponectin receptor protein 2 (386 aa).

Positions 1-71 (MNEPTENRLG…HEYSDEAPQE (71 aa)) are disordered. Residues 1–147 (MNEPTENRLG…SIFRIHTETG (147 aa)) are Cytoplasmic-facing. Positions 15–41 (PEPDIRLRKGHQLDGTRRGDNDSHQGD) are enriched in basic and acidic residues. Residues 148–168 (NIWTHLLGCVFFLCLGIFYMF) traverse the membrane as a helical segment. At 169 to 181 (RPNISFVAPLQEK) the chain is on the extracellular side. Residues 182-202 (VVFGLFFLGAILCLSFSWLFH) traverse the membrane as a helical segment. H202 provides a ligand contact to Zn(2+). At 203–213 (TVYCHSEGVSR) the chain is on the cytoplasmic side. The helical transmembrane segment at 214 to 234 (LFSKLDYSGIALLIMGSFVPW) threads the bilayer. Residues 235 to 245 (LYYSFYCNPQP) are Extracellular-facing. Residues 246-266 (CFIYLIVICVLGIAAIIVSQW) form a helical membrane-spanning segment. The Cytoplasmic portion of the chain corresponds to 267-273 (DMFATPQ). Residues 274 to 294 (YRGVRAGVFLGLGLSGIIPTL) traverse the membrane as a helical segment. The Extracellular portion of the chain corresponds to 295-309 (HYVISEGFLKAATIG). A helical transmembrane segment spans residues 310 to 330 (QIGWLMLMASLYITGAALYAA). Over 331–348 (RIPERFFPGKCDIWFHSH) the chain is Cytoplasmic. Zn(2+) is bound by residues H348 and H352. A helical membrane pass occupies residues 349-369 (QLFHIFVVAGAFVHFHGVSNL). Residues 370-386 (QEFRFMIGGGCSEEDAL) are Extracellular-facing.

It belongs to the ADIPOR family. May form homooligomers and heterooligomers with ADIPOR1. Interacts with APPL2 (via BAR domain); ADIPOQ dissociates this interaction. As to expression, ubiquitous. Highly expressed in skeletal muscle, liver and placenta. Weakly expressed in brain, heart, colon, spleen, kidney, thymus, small intestine, peripheral blood leukocytes and lung.

It is found in the cell membrane. In terms of biological role, receptor for ADIPOQ, an essential hormone secreted by adipocytes that regulates glucose and lipid metabolism. Required for normal body fat and glucose homeostasis. ADIPOQ-binding activates a signaling cascade that leads to increased PPARA activity, and ultimately to increased fatty acid oxidation and glucose uptake. Has intermediate affinity for globular and full-length adiponectin. Required for normal revascularization after chronic ischemia caused by severing of blood vessels. The chain is Adiponectin receptor protein 2 from Homo sapiens (Human).